Reading from the N-terminus, the 453-residue chain is Flavonol-3-O-rhamnosyltransferase (453 aa).

The active-site Proton acceptor is His24. His24 serves as a coordination point for an anthocyanidin. Asp119 (charge relay) is an active-site residue. An anthocyanidin is bound at residue His150. The UDP-beta-L-rhamnose site is built by Thr280, Ala333, His350, Asn354, Ser355, and Glu358. Residue Ala373 participates in an anthocyanidin binding.

The protein belongs to the UDP-glycosyltransferase family. As to expression, expressed in leaves, flowers, siliques, and stems. Expressed in the shoot apex.

It catalyses the reaction kaempferol + UDP-beta-L-rhamnose = kaempferol 3-O-alpha-L-rhamnoside + UDP + H(+). It carries out the reaction UDP-beta-L-rhamnose + quercetin = quercitrin + UDP + H(+). It participates in flavonoid metabolism. In terms of biological role, flavonol 3-O-rhamnosyltransferase that catalyzes the transfer of rhamnose from UDP-rhamnose to the 3-OH position of kaempferol and quercetin. Possesses low quercetin 3-O-glucosyltransferase activity in vitro. In Arabidopsis thaliana (Mouse-ear cress), this protein is Flavonol-3-O-rhamnosyltransferase.